Here is a 108-residue protein sequence, read N- to C-terminus: uncharacterized protein (108 aa).

A compositionally biased stretch (polar residues) spans 1–14 (MSDSNSRLVYSTET). The tract at residues 1–31 (MSDSNSRLVYSTETGRIDEPKAAPVRPKGDG) is disordered. Over residues 15 to 31 (GRIDEPKAAPVRPKGDG) the composition is skewed to basic and acidic residues.

Belongs to the SUI1 family.

This is an uncharacterized protein from Escherichia coli (strain K12).